We begin with the raw amino-acid sequence, 420 residues long: Glucose-1-phosphate adenylyltransferase (420 aa).

Alpha-D-glucose 1-phosphate-binding positions include Y107, G172, 187–188, and S205; that span reads EK.

It belongs to the bacterial/plant glucose-1-phosphate adenylyltransferase family. Homotetramer.

It catalyses the reaction alpha-D-glucose 1-phosphate + ATP + H(+) = ADP-alpha-D-glucose + diphosphate. It participates in glycan biosynthesis; glycogen biosynthesis. Functionally, involved in the biosynthesis of ADP-glucose, a building block required for the elongation reactions to produce glycogen. Catalyzes the reaction between ATP and alpha-D-glucose 1-phosphate (G1P) to produce pyrophosphate and ADP-Glc. This chain is Glucose-1-phosphate adenylyltransferase, found in Rhodopseudomonas palustris (strain BisB18).